A 238-amino-acid chain; its full sequence is Glutamine amidotransferase-like protein chyE (238 aa).

Residues 8-238 (KIAVLINTPP…LERVLQWLSE (231 aa)) enclose the Glutamine amidotransferase type-1 domain. Cys-102 acts as the Nucleophile in catalysis. Residues His-189 and Glu-191 contribute to the active site.

Belongs to the peptidase C26 family.

Its pathway is pigment biosynthesis. Functionally, glutamine amidotransferase-like protein; part of the gene cluster that mediates the biosynthesis of the yellow pigment chrysogine. the NRPS chyA mediates the condensation of anthranilic acid and alanine into the intermediate 2-(2-aminopropanamido)benzoic acid. The remainder of the pathway is highly branched yielding at least 13 chrysogine-related compounds. The malonyl transferase chyE converts 2-(2-aminopropanamido)benzoic acid and 2-(2-aminopropanamido)benzamidine into 2-(2-(2-carboxyacetamido)propanamido)benzoic acid and 3-((1-((2-carbamoylphenyl)amino)-1-oxopropan-2-yl)amino)-3-oxopropanoic acid, respectively. ChyD is an amidase, being responsible for the amidation of the carboxylic acid moiety of 2-(2-aminopropanamido)benzoic acid, 2-(2-(2-carboxyacetamido)propanamido)benzoic acid and 2-(2-((4-amino-1-carboxy-4-oxobutyl)amino)propanamido)benzoic acid. ChyC is involved in the same reactions as ChyD, but plays a more minor role in the amidation reactions compared to chyD. The oxidoreductases chyH and chyM are involved in oxidation reactions that form N-pyruvoylanthranilamide from 2-(2-aminopropanamido)benzamidine and (1-((2-carbamoylphenyl)amino)-1-oxopropan-2-yl)glutamine, respectively. N-pyruvoylanthranilamide is further converted via two further branches in the pathway, yielding chrysogine and additional chrysogine-related coumpounds. Chrysogine is likely formed by a spontaneous ring closure from N-pyruvoylanthranilamide. This chain is Glutamine amidotransferase-like protein chyE, found in Penicillium rubens (strain ATCC 28089 / DSM 1075 / NRRL 1951 / Wisconsin 54-1255) (Penicillium chrysogenum).